The primary structure comprises 792 residues: Coiled-coil domain-containing protein R3HCC1L (792 aa).

The segment at 7–27 (RCRVRARRPDMALYVPKARRG) is EJC-binding motif; may mediate interaction with the EJC. Disordered stretches follow at residues 32–61 (KTGD…QKEV) and 527–567 (EFKT…TSHT). The residue at position 688 (serine 688) is a Phosphoserine. Threonine 712 is subject to Phosphothreonine. Residues 751–783 (RSKQSKTEREAELKKLQEARERKRLEAKQREDI) adopt a coiled-coil conformation. The disordered stretch occupies residues 772-792 (RKRLEAKQREDIWEGRDQSTV).

May interact with the exon junction complex (EJC) composed at least of CASC3, EIF4A3, MAGOH and RBM8A. In terms of tissue distribution, expressed in placenta.

The sequence is that of Coiled-coil domain-containing protein R3HCC1L (R3HCC1L) from Homo sapiens (Human).